The chain runs to 736 residues: 1,4-alpha-glucan branching enzyme GlgB (736 aa).

Asp-419 functions as the Nucleophile in the catalytic mechanism. Residue Glu-472 is the Proton donor of the active site.

This sequence belongs to the glycosyl hydrolase 13 family. GlgB subfamily. In terms of assembly, monomer.

The catalysed reaction is Transfers a segment of a (1-&gt;4)-alpha-D-glucan chain to a primary hydroxy group in a similar glucan chain.. Its pathway is glycan biosynthesis; glycogen biosynthesis. Functionally, catalyzes the formation of the alpha-1,6-glucosidic linkages in glycogen by scission of a 1,4-alpha-linked oligosaccharide from growing alpha-1,4-glucan chains and the subsequent attachment of the oligosaccharide to the alpha-1,6 position. In Rhizobium meliloti (strain 1021) (Ensifer meliloti), this protein is 1,4-alpha-glucan branching enzyme GlgB.